The primary structure comprises 434 residues: Nicotinate phosphoribosyltransferase (434 aa).

His242 is subject to Phosphohistidine; by autocatalysis.

Belongs to the NAPRTase family. Transiently phosphorylated on a His residue during the reaction cycle. Phosphorylation strongly increases the affinity for substrates and increases the rate of nicotinate D-ribonucleotide production. Dephosphorylation regenerates the low-affinity form of the enzyme, leading to product release.

It carries out the reaction nicotinate + 5-phospho-alpha-D-ribose 1-diphosphate + ATP + H2O = nicotinate beta-D-ribonucleotide + ADP + phosphate + diphosphate. It participates in cofactor biosynthesis; NAD(+) biosynthesis; nicotinate D-ribonucleotide from nicotinate: step 1/1. Catalyzes the synthesis of beta-nicotinate D-ribonucleotide from nicotinate and 5-phospho-D-ribose 1-phosphate at the expense of ATP. This Bartonella tribocorum (strain CIP 105476 / IBS 506) protein is Nicotinate phosphoribosyltransferase.